A 222-amino-acid polypeptide reads, in one-letter code: Cysteine protease inhibitor 1 (222 aa).

The signal sequence occupies residues 1–26 (MKSINILSFLLLSSTLSLVAFARSFT). Residues 27-42 (SENPIVLPTTCHDDDN) constitute a propeptide that is removed on maturation. The Vacuolar targeting signal motif lies at 29 to 34 (NPIVLP). Cystine bridges form between C84–C136 and C185–C191.

Belongs to the protease inhibitor I3 (leguminous Kunitz-type inhibitor) family. Tubers, leaves.

Its subcellular location is the vacuole. Its function is as follows. Potent inhibitor of cathepsin l (cysteine protease). Does not inhibit trypsin or chymotrypsin (serine proteases). May protect the plant by inhibiting proteases of invading organisms. In Solanum tuberosum (Potato), this protein is Cysteine protease inhibitor 1.